The sequence spans 410 residues: Arginine biosynthesis bifunctional protein ArgJ (410 aa).

Residues T160, K186, T197, E283, N405, and T410 each contribute to the substrate site. T197 acts as the Nucleophile in catalysis.

It belongs to the ArgJ family. Heterotetramer of two alpha and two beta chains.

The protein resides in the cytoplasm. The catalysed reaction is N(2)-acetyl-L-ornithine + L-glutamate = N-acetyl-L-glutamate + L-ornithine. It catalyses the reaction L-glutamate + acetyl-CoA = N-acetyl-L-glutamate + CoA + H(+). It functions in the pathway amino-acid biosynthesis; L-arginine biosynthesis; L-ornithine and N-acetyl-L-glutamate from L-glutamate and N(2)-acetyl-L-ornithine (cyclic): step 1/1. It participates in amino-acid biosynthesis; L-arginine biosynthesis; N(2)-acetyl-L-ornithine from L-glutamate: step 1/4. With respect to regulation, competitively inhibited by L-ornithine. Its function is as follows. Catalyzes two activities which are involved in the cyclic version of arginine biosynthesis: the synthesis of N-acetylglutamate from glutamate and acetyl-CoA as the acetyl donor, and of ornithine by transacetylation between N(2)-acetylornithine and glutamate. In Geobacillus stearothermophilus (Bacillus stearothermophilus), this protein is Arginine biosynthesis bifunctional protein ArgJ.